The primary structure comprises 320 residues: Holliday junction branch migration complex subunit RuvB (320 aa).

Residues 1–172 form a large ATPase domain (RuvB-L) region; the sequence is MTANVCLDES…FGIISRLEYY (172 aa). Residues Arg-12, Gly-53, Lys-56, Thr-57, Thr-58, 119–121, Arg-162, Tyr-172, and Arg-209 contribute to the ATP site; that span reads EDF. A Mg(2+)-binding site is contributed by Thr-57. Residues 173-243 form a small ATPAse domain (RuvB-S) region; sequence TPADLARIVA…LASEALGRME (71 aa). Positions 246 to 320 are head domain (RuvB-H); sequence ESGLDQMDRK…KAYRHLNLLG (75 aa). Residues Arg-301 and Arg-306 each coordinate DNA.

Belongs to the RuvB family. As to quaternary structure, homohexamer. Forms an RuvA(8)-RuvB(12)-Holliday junction (HJ) complex. HJ DNA is sandwiched between 2 RuvA tetramers; dsDNA enters through RuvA and exits via RuvB. An RuvB hexamer assembles on each DNA strand where it exits the tetramer. Each RuvB hexamer is contacted by two RuvA subunits (via domain III) on 2 adjacent RuvB subunits; this complex drives branch migration. In the full resolvosome a probable DNA-RuvA(4)-RuvB(12)-RuvC(2) complex forms which resolves the HJ.

It is found in the cytoplasm. The enzyme catalyses ATP + H2O = ADP + phosphate + H(+). The RuvA-RuvB-RuvC complex processes Holliday junction (HJ) DNA during genetic recombination and DNA repair, while the RuvA-RuvB complex plays an important role in the rescue of blocked DNA replication forks via replication fork reversal (RFR). RuvA specifically binds to HJ cruciform DNA, conferring on it an open structure. The RuvB hexamer acts as an ATP-dependent pump, pulling dsDNA into and through the RuvAB complex. RuvB forms 2 homohexamers on either side of HJ DNA bound by 1 or 2 RuvA tetramers; 4 subunits per hexamer contact DNA at a time. Coordinated motions by a converter formed by DNA-disengaged RuvB subunits stimulates ATP hydrolysis and nucleotide exchange. Immobilization of the converter enables RuvB to convert the ATP-contained energy into a lever motion, pulling 2 nucleotides of DNA out of the RuvA tetramer per ATP hydrolyzed, thus driving DNA branch migration. The RuvB motors rotate together with the DNA substrate, which together with the progressing nucleotide cycle form the mechanistic basis for DNA recombination by continuous HJ branch migration. Branch migration allows RuvC to scan DNA until it finds its consensus sequence, where it cleaves and resolves cruciform DNA. This chain is Holliday junction branch migration complex subunit RuvB, found in Nitratidesulfovibrio vulgaris (strain ATCC 29579 / DSM 644 / CCUG 34227 / NCIMB 8303 / VKM B-1760 / Hildenborough) (Desulfovibrio vulgaris).